Consider the following 142-residue polypeptide: Small ribosomal subunit protein uS9 (142 aa).

The protein belongs to the universal ribosomal protein uS9 family. As to quaternary structure, component of the small ribosomal subunit. Mature ribosomes consist of a small (40S) and a large (60S) subunit. The 40S subunit contains about 32 different proteins and 1 molecule of RNA (18S). The 60S subunit contains 45 different proteins and 3 molecules of RNA (25S, 5.8S and 5S).

It localises to the cytoplasm. Component of the ribosome, a large ribonucleoprotein complex responsible for the synthesis of proteins in the cell. The small ribosomal subunit (SSU) binds messenger RNAs (mRNAs) and translates the encoded message by selecting cognate aminoacyl-transfer RNA (tRNA) molecules. The large subunit (LSU) contains the ribosomal catalytic site termed the peptidyl transferase center (PTC), which catalyzes the formation of peptide bonds, thereby polymerizing the amino acids delivered by tRNAs into a polypeptide chain. The nascent polypeptides leave the ribosome through a tunnel in the LSU and interact with protein factors that function in enzymatic processing, targeting, and the membrane insertion of nascent chains at the exit of the ribosomal tunnel. The protein is Small ribosomal subunit protein uS9 (RPS16A) of Candida albicans (strain SC5314 / ATCC MYA-2876) (Yeast).